The sequence spans 140 residues: Ribonuclease P protein component (140 aa).

Positions 33 to 54 (RALKPSSAKKSSLDTAAKTQPA) are disordered.

The protein belongs to the RnpA family. In terms of assembly, consists of a catalytic RNA component (M1 or rnpB) and a protein subunit.

It catalyses the reaction Endonucleolytic cleavage of RNA, removing 5'-extranucleotides from tRNA precursor.. In terms of biological role, RNaseP catalyzes the removal of the 5'-leader sequence from pre-tRNA to produce the mature 5'-terminus. It can also cleave other RNA substrates such as 4.5S RNA. The protein component plays an auxiliary but essential role in vivo by binding to the 5'-leader sequence and broadening the substrate specificity of the ribozyme. The sequence is that of Ribonuclease P protein component from Trichormus variabilis (strain ATCC 29413 / PCC 7937) (Anabaena variabilis).